A 403-amino-acid chain; its full sequence is Phosphoglycerate kinase (403 aa).

Residues 21 to 23, Arg37, 60 to 63, Arg125, and Arg158 each bind substrate; these read DFN and HLGR. ATP contacts are provided by residues Lys209, Glu332, and 359–362; that span reads GGDS.

The protein belongs to the phosphoglycerate kinase family. In terms of assembly, monomer.

The protein resides in the cytoplasm. It catalyses the reaction (2R)-3-phosphoglycerate + ATP = (2R)-3-phospho-glyceroyl phosphate + ADP. It participates in carbohydrate degradation; glycolysis; pyruvate from D-glyceraldehyde 3-phosphate: step 2/5. In Koribacter versatilis (strain Ellin345), this protein is Phosphoglycerate kinase.